A 317-amino-acid chain; its full sequence is Melanocyte-stimulating hormone receptor (317 aa).

Topologically, residues 1-37 are extracellular; it reads MPMQGAQKRLLGSLNSTPTATPNLGLAANHTGAPCLE. N-linked (GlcNAc...) asparagine glycosylation occurs at Asn29. Residues 38 to 63 form a helical membrane-spanning segment; the sequence is VSIPDGLFLSLGLVSLVENVLVVAAI. Residues 64–72 lie on the Cytoplasmic side of the membrane; that stretch reads AKNRNLHSP. A helical transmembrane segment spans residues 73–93; it reads MYCFICCLALSDLLVSSSNML. The Extracellular segment spans residues 94-118; it reads ETAVILLLEAGALATRASVVQQLQN. The chain crosses the membrane as a helical span at residues 119–140; the sequence is TIDVLTCSSMLCSLCFLGAIAV. The Cytoplasmic segment spans residues 141-163; that stretch reads DRHVSIFYALRYHSIMTLARARR. A helical transmembrane segment spans residues 164–183; it reads AIAAIWVASVLSSTLFIAYC. Residues 184-191 are Extracellular-facing; sequence DHAXVLLC. A helical transmembrane segment spans residues 192–211; that stretch reads LVVFFLAMLVLMAVLYVHML. At 212–240 the chain is on the cytoplasmic side; it reads ARACQHAQGITRLHQRQPPAHQGFGFRGA. The helical transmembrane segment at 241–266 threads the bilayer; the sequence is ATLTILLGIFFLCWGPFFLHLTLVVL. Topologically, residues 267-279 are extracellular; it reads CPQHLTCSCIFKN. A helical membrane pass occupies residues 280-300; it reads FKVFLTLIICSTIIDPLIYAF. The Cytoplasmic segment spans residues 301 to 317; it reads RSQELRRTLKELLLCSW. Cys315 is lipidated: S-palmitoyl cysteine.

Belongs to the G-protein coupled receptor 1 family. As to quaternary structure, interacts with MGRN1, but does not undergo MGRN1-mediated ubiquitination; this interaction competes with GNAS-binding and thus inhibits agonist-induced cAMP production. Interacts with OPN3; the interaction results in a decrease in MC1R-mediated cAMP signaling and ultimately a decrease in melanin production in melanocytes.

It is found in the cell membrane. Receptor for MSH (alpha, beta and gamma) and ACTH. The activity of this receptor is mediated by G proteins which activate adenylate cyclase. Mediates melanogenesis, the production of eumelanin (black/brown) and phaeomelanin (red/yellow), via regulation of cAMP signaling in melanocytes. This Ateles paniscus (Black spider monkey) protein is Melanocyte-stimulating hormone receptor (MC1R).